Here is a 75-residue protein sequence, read N- to C-terminus: Carwaprin-a (75 aa).

The first 24 residues, 1–24 (MSSGGLLLLLGLLTLWAELTPISG), serve as a signal peptide directing secretion. The 46-residue stretch at 27 to 72 (RPKKPGLCPPRPQKPPCVRECKNDWRCPGEQKCCRYGCIYECRDPI) folds into the WAP domain. 4 cysteine pairs are disulfide-bonded: cysteine 34–cysteine 60, cysteine 43–cysteine 64, cysteine 47–cysteine 59, and cysteine 53–cysteine 68.

This sequence belongs to the venom waprin family. In terms of tissue distribution, expressed by the venom gland.

It localises to the secreted. Damages membranes of susceptible bacteria. Has no hemolytic activity. Not toxic to mice. Does not inhibit the proteinases elastase and cathepsin G. This Tropidechis carinatus (Australian rough-scaled snake) protein is Carwaprin-a.